The sequence spans 264 residues: Thymidylate synthase (264 aa).

Residue arginine 21 coordinates dUMP. Histidine 51 lines the (6R)-5,10-methylene-5,6,7,8-tetrahydrofolate pocket. Arginine 126 to arginine 127 is a binding site for dUMP. Cysteine 146 functions as the Nucleophile in the catalytic mechanism. Residues arginine 166 to aspartate 169, asparagine 177, and histidine 207 to tyrosine 209 each bind dUMP. Aspartate 169 is a binding site for (6R)-5,10-methylene-5,6,7,8-tetrahydrofolate. Residue alanine 263 participates in (6R)-5,10-methylene-5,6,7,8-tetrahydrofolate binding.

The protein belongs to the thymidylate synthase family. Bacterial-type ThyA subfamily. Homodimer.

The protein localises to the cytoplasm. The enzyme catalyses dUMP + (6R)-5,10-methylene-5,6,7,8-tetrahydrofolate = 7,8-dihydrofolate + dTMP. Its pathway is pyrimidine metabolism; dTTP biosynthesis. Functionally, catalyzes the reductive methylation of 2'-deoxyuridine-5'-monophosphate (dUMP) to 2'-deoxythymidine-5'-monophosphate (dTMP) while utilizing 5,10-methylenetetrahydrofolate (mTHF) as the methyl donor and reductant in the reaction, yielding dihydrofolate (DHF) as a by-product. This enzymatic reaction provides an intracellular de novo source of dTMP, an essential precursor for DNA biosynthesis. In Ruthia magnifica subsp. Calyptogena magnifica, this protein is Thymidylate synthase.